The chain runs to 485 residues: Ribosomal protein uS12 methylthiotransferase RimO (485 aa).

The MTTase N-terminal domain maps to 19-135 (VKVGFISLGC…IGEVVAGILA (117 aa)). [4Fe-4S] cluster is bound by residues Cys-28, Cys-64, Cys-98, Cys-172, Cys-176, and Cys-179. Positions 158–387 (ATPGYTAYLK…MEVQQEIARR (230 aa)) constitute a Radical SAM core domain. Residues 390-461 (QLQVGRELEV…DYDLLGEATE (72 aa)) enclose the TRAM domain.

It belongs to the methylthiotransferase family. RimO subfamily. The cofactor is [4Fe-4S] cluster.

It localises to the cytoplasm. It catalyses the reaction L-aspartate(89)-[ribosomal protein uS12]-hydrogen + (sulfur carrier)-SH + AH2 + 2 S-adenosyl-L-methionine = 3-methylsulfanyl-L-aspartate(89)-[ribosomal protein uS12]-hydrogen + (sulfur carrier)-H + 5'-deoxyadenosine + L-methionine + A + S-adenosyl-L-homocysteine + 2 H(+). Catalyzes the methylthiolation of an aspartic acid residue of ribosomal protein uS12. This chain is Ribosomal protein uS12 methylthiotransferase RimO, found in Symbiobacterium thermophilum (strain DSM 24528 / JCM 14929 / IAM 14863 / T).